A 226-amino-acid polypeptide reads, in one-letter code: ATP synthase F(0) complex subunit a (226 aa).

6 helical membrane passes run 13-33, 69-89, 97-117, 138-158, 179-199, and 201-221; these read VILG…LISW, WALL…LGLL, TQLS…VIMA, IPVL…ALGV, FVLL…LFLL, and LLEI…LSLY.

Belongs to the ATPase A chain family. As to quaternary structure, component of the ATP synthase complex composed at least of ATP5F1A/subunit alpha, ATP5F1B/subunit beta, ATP5MC1/subunit c (homooctomer), MT-ATP6/subunit a, MT-ATP8/subunit 8, ATP5ME/subunit e, ATP5MF/subunit f, ATP5MG/subunit g, ATP5MK/subunit k, ATP5MJ/subunit j, ATP5F1C/subunit gamma, ATP5F1D/subunit delta, ATP5F1E/subunit epsilon, ATP5PF/subunit F6, ATP5PB/subunit b, ATP5PD/subunit d, ATP5PO/subunit OSCP. ATP synthase complex consists of a soluble F(1) head domain (subunits alpha(3) and beta(3)) - the catalytic core - and a membrane F(0) domain - the membrane proton channel (subunits c, a, 8, e, f, g, k and j). These two domains are linked by a central stalk (subunits gamma, delta, and epsilon) rotating inside the F1 region and a stationary peripheral stalk (subunits F6, b, d, and OSCP). Interacts with DNAJC30; interaction is direct.

Its subcellular location is the mitochondrion inner membrane. The catalysed reaction is H(+)(in) = H(+)(out). Functionally, subunit a, of the mitochondrial membrane ATP synthase complex (F(1)F(0) ATP synthase or Complex V) that produces ATP from ADP in the presence of a proton gradient across the membrane which is generated by electron transport complexes of the respiratory chain. ATP synthase complex consist of a soluble F(1) head domain - the catalytic core - and a membrane F(1) domain - the membrane proton channel. These two domains are linked by a central stalk rotating inside the F(1) region and a stationary peripheral stalk. During catalysis, ATP synthesis in the catalytic domain of F(1) is coupled via a rotary mechanism of the central stalk subunits to proton translocation. With the subunit c (ATP5MC1), forms the proton-conducting channel in the F(0) domain, that contains two crucial half-channels (inlet and outlet) that facilitate proton movement from the mitochondrial intermembrane space (IMS) into the matrix. Protons are taken up via the inlet half-channel and released through the outlet half-channel, following a Grotthuss mechanism. The polypeptide is ATP synthase F(0) complex subunit a (Xenopus laevis (African clawed frog)).